The sequence spans 400 residues: Mu-type opioid receptor (400 aa).

Topologically, residues 1–68 (MDSSAVPTNA…CPPTGSPSMI (68 aa)) are extracellular. N-linked (GlcNAc...) asparagine glycans are attached at residues asparagine 9, asparagine 12, asparagine 33, asparagine 40, and asparagine 48. A helical transmembrane segment spans residues 69-93 (TAITIMALYSIVCVVGLFGNFLVMY). Residues 94–106 (VIVRYTKMKTATN) are Cytoplasmic-facing. Residues 107–131 (IYIFNLALADALVTSTLPFQSVNYL) form a helical membrane-spanning segment. Residues 132–142 (MGTWPFGTILC) lie on the Extracellular side of the membrane. Cysteine 142 and cysteine 219 are disulfide-bonded. Residues 143–165 (KIVISIDYYNMSTSIFTLCTMSV) traverse the membrane as a helical segment. The Cytoplasmic segment spans residues 166–185 (DRYIAVCHPVKALDFRTPRN). Tyrosine 168 bears the Phosphotyrosine mark. The helical transmembrane segment at 186–207 (AKIINVCNWILSSAIGLPVMFM) threads the bilayer. At 208–230 (ATTKYRQGSIDCTLTFSHPSWYW) the chain is on the extracellular side. Residues 231–255 (ENLLKICVFIFAFIMPVLIITVCYG) traverse the membrane as a helical segment. Residues 256-283 (LMILRLKSVRMLSGSKEKDRNLRRITRM) lie on the Cytoplasmic side of the membrane. The helical transmembrane segment at 284–306 (VLVVVAVFIICWTPIHIYVIIKA) threads the bilayer. Over 307 to 314 (LVTIPETT) the chain is Extracellular. The chain crosses the membrane as a helical span at residues 315-338 (FQTVSWHFCIALGYTNSCLNPVLY). The NPxxY; plays a role in stabilizing the activated conformation of the receptor motif lies at 334 to 338 (NPVLY). Topologically, residues 339–400 (AFLDEDFKRC…NLEAETAPLP (62 aa)) are cytoplasmic. Cysteine 353 carries S-palmitoyl cysteine lipidation. A disordered region spans residues 364-386 (NSTRIRQNTRDHPSTANTVDRTN). Serine 365 bears the Phosphoserine mark. At threonine 372 the chain carries Phosphothreonine. Residue serine 377 is modified to Phosphoserine. The residue at position 396 (threonine 396) is a Phosphothreonine.

This sequence belongs to the G-protein coupled receptor 1 family. As to quaternary structure, forms homooligomers and heterooligomers with other GPCRs, such as OPRD1, OPRK1, OPRL1, NPFFR2, ADRA2A, SSTR2, CNR1 and CCR5 (probably in dimeric forms). Interacts with heterotrimeric G proteins; interaction with a heterotrimeric complex containing GNAI1, GNB1 and GNG2 stabilizes the active conformation of the receptor and increases its affinity for endomorphin-2, the synthetic opioid peptide DAMGO and for morphinan agonists. Interacts with PPL; the interaction disrupts agonist-mediated G-protein activation. Interacts (via C-terminus) with DNAJB4 (via C-terminus). Interacts with calmodulin; the interaction inhibits the constitutive activity of OPRM1; it abolishes basal and attenuates agonist-stimulated G-protein coupling. Interacts with FLNA, PLD2, RANBP9 and WLS and GPM6A. Interacts with RTP4. Interacts with SYP and GNAS. Interacts with RGS9, RGS17, RGS20, RGS4, PPP1R9B and HINT1. In terms of processing, phosphorylated. Differentially phosphorylated in basal and agonist-induced conditions. Agonist-mediated phosphorylation modulates receptor internalization. Phosphorylated by GRK2 in a agonist-dependent manner. Phosphorylation at Tyr-168 requires receptor activation, is dependent on non-receptor protein tyrosine kinase Src and results in a decrease in agonist efficacy by reducing G-protein coupling efficiency. Phosphorylated on tyrosine residues; the phosphorylation is involved in agonist-induced G-protein-independent receptor down-regulation. Phosphorylation at Ser-377 is involved in G-protein-dependent but not beta-arrestin-dependent activation of the ERK pathway. Ubiquitinated. A basal ubiquitination seems not to be related to degradation. Ubiquitination is increased upon formation of OPRM1:OPRD1 oligomers leading to proteasomal degradation; the ubiquitination is diminished by RTP4.

The protein localises to the cell membrane. It is found in the cell projection. The protein resides in the axon. Its subcellular location is the perikaryon. It localises to the dendrite. The protein localises to the endosome. Receptor for endogenous opioids such as beta-endorphin and endomorphin. Receptor for natural and synthetic opioids including morphine, heroin, DAMGO, fentanyl, etorphine, buprenorphin and methadone. Also activated by enkephalin peptides, such as Met-enkephalin or Met-enkephalin-Arg-Phe, with higher affinity for Met-enkephalin-Arg-Phe. Agonist binding to the receptor induces coupling to an inactive GDP-bound heterotrimeric G-protein complex and subsequent exchange of GDP for GTP in the G-protein alpha subunit leading to dissociation of the G-protein complex with the free GTP-bound G-protein alpha and the G-protein beta-gamma dimer activating downstream cellular effectors. The agonist- and cell type-specific activity is predominantly coupled to pertussis toxin-sensitive G(i) and G(o) G alpha proteins, GNAI1, GNAI2, GNAI3 and GNAO1, and to a lesser extent to pertussis toxin-insensitive G alpha proteins GNAZ and GNA15. They mediate an array of downstream cellular responses, including inhibition of adenylate cyclase activity and both N-type and L-type calcium channels, activation of inward rectifying potassium channels, mitogen-activated protein kinase (MAPK), phospholipase C (PLC), phosphoinositide/protein kinase (PKC), phosphoinositide 3-kinase (PI3K) and regulation of NF-kappa-B. Also couples to adenylate cyclase stimulatory G alpha proteins. The selective temporal coupling to G-proteins and subsequent signaling can be regulated by RGSZ proteins, such as RGS9, RGS17 and RGS4. Phosphorylation by members of the GPRK subfamily of Ser/Thr protein kinases and association with beta-arrestins is involved in short-term receptor desensitization. Beta-arrestins associate with the GPRK-phosphorylated receptor and uncouple it from the G-protein thus terminating signal transduction. The phosphorylated receptor is internalized through endocytosis via clathrin-coated pits which involves beta-arrestins. The activation of the ERK pathway occurs either in a G-protein-dependent or a beta-arrestin-dependent manner and is regulated by agonist-specific receptor phosphorylation. Acts as a class A G-protein coupled receptor (GPCR) which dissociates from beta-arrestin at or near the plasma membrane and undergoes rapid recycling. Receptor down-regulation pathways are varying with the agonist and occur dependent or independent of G-protein coupling. Endogenous ligands induce rapid desensitization, endocytosis and recycling. Heterooligomerization with other GPCRs can modulate agonist binding, signaling and trafficking properties. Involved in neurogenesis. The polypeptide is Mu-type opioid receptor (OPRM1) (Macaca mulatta (Rhesus macaque)).